Consider the following 479-residue polypeptide: U2 small nuclear ribonucleoprotein auxiliary factor 35 kDa subunit-related protein 1 (479 aa).

The tract at residues 1–63 (MAALEKMTFP…EDTFIEEQQL (63 aa)) is disordered. Residues 20-37 (SHKKYRAALKKEKRKKRR) are compositionally biased toward basic residues. Acidic residues predominate over residues 50-63 (QEEEEDTFIEEQQL). K67 participates in a covalent cross-link: Glycyl lysine isopeptide (Lys-Gly) (interchain with G-Cter in SUMO2). The segment at 171–199 (EKDRANCPFYSKTGACRFGDRCSRKHNFP) adopts a C3H1-type 1 zinc-finger fold. One can recognise an RRM domain in the interval 203–309 (PTLLIKSMFT…RQLQCEFCPV (107 aa)). The C3H1-type 2 zinc finger occupies 311-338 (RWKMAICGLFEIQQCPRGKHCNFLHVFR). S354 is subject to Phosphoserine. Residues 356–479 (DQTGSSFGKN…DRTVQSPQSK (124 aa)) form a disordered region. Basic and acidic residues-rich tracts occupy residues 365 to 379 (NSER…DHYY) and 388 to 403 (PSPD…SERK). The residue at position 389 (S389) is a Phosphoserine. Composition is skewed to basic residues over residues 404 to 417 (KSSH…KRTS) and 442 to 451 (SQSRRSHRSR).

It is found in the nucleus. The polypeptide is U2 small nuclear ribonucleoprotein auxiliary factor 35 kDa subunit-related protein 1 (Homo sapiens (Human)).